A 279-amino-acid chain; its full sequence is BEN domain-containing protein 6 (279 aa).

Over residues 1–15 (MQKIVQTDEITNTQA) the composition is skewed to polar residues. 2 disordered regions span residues 1 to 65 (MQKI…LAEL) and 134 to 172 (RATN…TDEK). Residues 62–99 (LAELSKEELCAKIKSLKEKLTNTRKENSRLRQSLVMLQ) are a coiled coil. The segment covering 134–148 (RATNNSSPDSFASTC) has biased composition (polar residues). Residues 162–172 (KPEEEHQTDEK) show a composition bias toward basic and acidic residues. The 101-residue stretch at 171 to 271 (EKQFQIEKWQ…NCTKKPNLSK (101 aa)) folds into the BEN domain.

Interacts (via BEN domain) with RBPJ.

The protein resides in the nucleus. Functionally, acts as a corepressor of recombining binding protein suppressor hairless (RBPJ) and inhibits Notch signaling in neural stem cells, thereby opposing their self-renewal and promoting neurogenesis. This Homo sapiens (Human) protein is BEN domain-containing protein 6 (BEND6).